A 465-amino-acid polypeptide reads, in one-letter code: 3-isopropylmalate dehydratase large subunit (465 aa).

[4Fe-4S] cluster is bound by residues Cys347, Cys407, and Cys410. Residues 416–443 (DTLRPGERSASTSNRNFEGRQGPGGRTH) are disordered.

It belongs to the aconitase/IPM isomerase family. LeuC type 1 subfamily. As to quaternary structure, heterodimer of LeuC and LeuD. [4Fe-4S] cluster serves as cofactor.

It carries out the reaction (2R,3S)-3-isopropylmalate = (2S)-2-isopropylmalate. The protein operates within amino-acid biosynthesis; L-leucine biosynthesis; L-leucine from 3-methyl-2-oxobutanoate: step 2/4. Its function is as follows. Catalyzes the isomerization between 2-isopropylmalate and 3-isopropylmalate, via the formation of 2-isopropylmaleate. The sequence is that of 3-isopropylmalate dehydratase large subunit from Frankia alni (strain DSM 45986 / CECT 9034 / ACN14a).